A 259-amino-acid polypeptide reads, in one-letter code: Protein unc-50 homolog (259 aa).

M1 bears the N-acetylmethionine mark. Residues 1–82 lie on the Cytoplasmic side of the membrane; that stretch reads MLPSTSVNSL…TKDQWARDDP (82 aa). S6 carries the post-translational modification Phosphoserine. Residues 83 to 103 traverse the membrane as a helical segment; that stretch reads AFLVLLSIWLCVSTIGFGFVL. At 104-115 the chain is on the lumenal side; it reads DMGFFETIKLLL. The chain crosses the membrane as a helical span at residues 116–136; that stretch reads WVVLIDCVGVGLLIATLMWFI. At 137–163 the chain is on the cytoplasmic side; that stretch reads SNKYLVKRQSRDYDVEWGYAFDVHLNA. A helical membrane pass occupies residues 164–184; the sequence is FYPLLVILHFIQLFFINHVIL. The Lumenal portion of the chain corresponds to 185 to 187; the sequence is TDT. A helical membrane pass occupies residues 188-208; that stretch reads FIGYLVGNTLWLVAVGYYIYV. At 209-222 the chain is on the cytoplasmic side; the sequence is TFLGYSALPFLKNT. The helical transmembrane segment at 223 to 243 threads the bilayer; the sequence is VILLYPFAPLILLYGLSLALG. Over 244 to 259 the chain is Lumenal; that stretch reads WNFTHTLCSFYKYRVK.

Belongs to the unc-50 family. As to expression, present in periodontal ligament fibroblasts (at protein level).

The protein localises to the nucleus inner membrane. The protein resides in the golgi apparatus membrane. Functionally, involved in the cell surface expression of neuronal nicotinic receptors. Binds RNA. The sequence is that of Protein unc-50 homolog (UNC50) from Homo sapiens (Human).